A 274-amino-acid polypeptide reads, in one-letter code: Large ribosomal subunit protein uL2cz/uL2cy (274 aa).

Disordered stretches follow at residues 1–23 (MAIH…SKVK) and 224–274 (NPVD…RRSK).

Belongs to the universal ribosomal protein uL2 family. Part of the 50S ribosomal subunit.

It localises to the plastid. The protein resides in the chloroplast. In Lactuca sativa (Garden lettuce), this protein is Large ribosomal subunit protein uL2cz/uL2cy (rpl2-A).